A 368-amino-acid polypeptide reads, in one-letter code: V-type proton ATPase subunit C (368 aa).

It belongs to the V-ATPase C subunit family. V-ATPase is a heteromultimeric enzyme composed of a peripheral catalytic V1 complex (components A to H) attached to an integral membrane V0 proton pore complex (components: a, c, c', c'' and d).

Functionally, subunit of the peripheral V1 complex of vacuolar ATPase. Subunit C is necessary for the assembly of the catalytic sector of the enzyme and is likely to have a specific function in its catalytic activity. V-ATPase is responsible for acidifying a variety of intracellular compartments in eukaryotic cells. This Dictyostelium discoideum (Social amoeba) protein is V-type proton ATPase subunit C (vatC).